The chain runs to 548 residues: Chaperonin GroEL (548 aa).

Residues 30 to 33 (TLGP), Lys-51, 87 to 91 (DGTTT), Gly-415, 479 to 481 (NAA), and Asp-495 each bind ATP. Residues 524–548 (LPKEDKSSDSNSSPAGGMGGMGGMM) are disordered. The span at 539 to 548 (GGMGGMGGMM) shows a compositional bias: gly residues.

The protein belongs to the chaperonin (HSP60) family. Forms a cylinder of 14 subunits composed of two heptameric rings stacked back-to-back. Interacts with the co-chaperonin GroES.

The protein localises to the cytoplasm. The catalysed reaction is ATP + H2O + a folded polypeptide = ADP + phosphate + an unfolded polypeptide.. In terms of biological role, together with its co-chaperonin GroES, plays an essential role in assisting protein folding. The GroEL-GroES system forms a nano-cage that allows encapsulation of the non-native substrate proteins and provides a physical environment optimized to promote and accelerate protein folding. The sequence is that of Chaperonin GroEL from Buchnera aphidicola subsp. Myzus persicae (Myzus persicae primary endosymbiont).